Consider the following 273-residue polypeptide: Non-homologous end joining protein Ku (273 aa).

The Ku domain occupies 13-190 (KLSLVTCPVA…FTGIEKKSDA (178 aa)). The segment at 227–251 (KKKAKKPSKAKASKSTKGDDEEKSN) is disordered. The segment covering 228–240 (KKAKKPSKAKASK) has biased composition (basic residues).

This sequence belongs to the prokaryotic Ku family. Homodimer. Interacts with LigD.

Functionally, with LigD forms a non-homologous end joining (NHEJ) DNA repair enzyme, which repairs dsDNA breaks with reduced fidelity. Binds linear dsDNA with 5'- and 3'- overhangs but not closed circular dsDNA nor ssDNA. Recruits and stimulates the ligase activity of LigD. In Allorhizobium ampelinum (strain ATCC BAA-846 / DSM 112012 / S4) (Agrobacterium vitis (strain S4)), this protein is Non-homologous end joining protein Ku.